A 343-amino-acid polypeptide reads, in one-letter code: D-beta-hydroxybutyrate dehydrogenase, mitochondrial (343 aa).

The transit peptide at 1–46 (MLAARLSRPLSQLPGKALSVCDRENGTRHTLLFYPASFSPDTRRTY) directs the protein to the mitochondrion. Residue 59-83 (LVTGCDSGFGFSLAKHLHSKGFLVF) coordinates NAD(+). Lysine 73 bears the N6-acetyllysine mark. Position 103 is an N6-acetyllysine; alternate (lysine 103). Residue lysine 103 is modified to N6-succinyllysine; alternate. N6-acetyllysine is present on residues lysine 132 and lysine 177. Serine 195 serves as a coordination point for substrate. The active-site Proton acceptor is the tyrosine 208. Position 212 is an N6-acetyllysine (lysine 212). Residue serine 219 is glycosylated (O-linked (GlcNAc) serine). Serine 246 bears the Phosphoserine mark. Lysine 258 is subject to N6-acetyllysine. N6-acetyllysine; alternate is present on lysine 259. Lysine 259 carries the N6-succinyllysine; alternate modification. Lysine 280 carries the N6-acetyllysine modification.

The protein belongs to the short-chain dehydrogenases/reductases (SDR) family. Homotetramer. In terms of tissue distribution, expressed in liver.

Its subcellular location is the mitochondrion inner membrane. The protein localises to the mitochondrion matrix. The catalysed reaction is (R)-3-hydroxybutanoate + NAD(+) = acetoacetate + NADH + H(+). Its activity is regulated as follows. Requires phosphatidylcholine as an allosteric activator for enzymatic activity. The chain is D-beta-hydroxybutyrate dehydrogenase, mitochondrial from Rattus norvegicus (Rat).